A 370-amino-acid chain; its full sequence is MFASILGKIPQYSTISSKCSLKECRKVKKVENSDEIGEIIHRDFLDPFCNEYVLIGEEETSLGINYLQFEEEIRTFEIRDSDIIVASYPKAGTTWTQELVWLIGNDLDFKAAEEHLDKRFPHFELCTIVNFAKMTEMLGSTRPEYIGNSINYLRDLEGTRFIKTHLTYNLLPEQILNGNRKPKIIYVMRDPKDVCVSYYHHGRLIQGWRADFQNFSKVFLSEKIMFGSYWKHVLGYWEHRDKPNVLILTYEEMKKDLLSVIRKTAQFLDKKLNENKIPQLLKHLSFESMKNNRAVNQQDKIESRMKHKLVPEQGAFMRSGTSQNYKGEMSEELILKFDEWTKKSISGSSFVTEPIADLYLNTSQKSVPKM.

Position 90–95 (90–95 (KAGTTW)) interacts with 3'-phosphoadenylyl sulfate. Catalysis depends on His-165, which acts as the Proton acceptor. Residues Arg-189, Ser-197, Tyr-250, 284-289 (LSFESM), and 316-320 (FMRSG) contribute to the 3'-phosphoadenylyl sulfate site.

Belongs to the sulfotransferase 1 family.

The catalysed reaction is firefly D-luciferin + 3'-phosphoadenylyl sulfate = firefly D-sulfoluciferin + adenosine 3',5'-bisphosphate + H(+). The enzyme catalyses firefly L-luciferin + 3'-phosphoadenylyl sulfate = firefly L-sulfoluciferin + adenosine 3',5'-bisphosphate + H(+). Its activity is regulated as follows. Sulfoluciferin formation is inhibited by the product adenosine 3',5'-bisphosphate. Its function is as follows. Catalyzes the production of firefly sulfoluciferin from luciferin using the sulfo-donor 3'-phosphoadenylyl sulfate (PAPS). Is also able to catalyze the reverse reaction, i.e. the adenosine 3',5'-bisphosphate-dependent desulfonation of sulfoluciferin. Can use either D- or L-luciferin stereoisomer as substrate. Sulfoluciferin, which is not a substrate of P.pyralis luciferase, likely serves as a luciferin storage form in fireflies. This is Luciferin sulfotransferase from Photinus pyralis (Common eastern firefly).